Here is a 494-residue protein sequence, read N- to C-terminus: MDLRVGRKFRIGRKIGSGSFGDIYHGTNLISGEEVAIKLESIRSRHPQLDYESRVYRYLSGGVGIPFIRWFGREGEYNAMVIDLLGPSLEDLFNYCHRRFSFKTVIMLALQMFCRIQYIHGRSFIHRDIKPDNFLMGVGRRGSTVHVIDFGLSKKYRDFNTHRHIPYRENKSLTGTARYASVNTHLGIEQSRRDDLESLGYVLIYFCKGSLPWQGLKATTKKQKYDRIMEKKLNVSVETLCSGLPLEFQEYMAYCKNLKFDEKPDYLFLARLFKDLSIKLEYHNDHLFDWTMLRYTKAMVEKQRDLLIEKGDLNANSNAASASNSTDNKSETFNKIKLLAMKKFPTHFHYYKNEDKHNPSPEEIKQQTILNNNAASSLPEELLNALDKGMENLRQQQPQQQVQSSQPQPQPQQLQQQPNGQRPNYYPEPLLQQQQRDSQEQQQQVPMATTRATQYPPQINSNNFNTNQASVPPQMRSNPQQPPQDKPAGQSIWL.

The Protein kinase domain maps to 9-278 (FRIGRKIGSG…LARLFKDLSI (270 aa)). ATP contacts are provided by residues 15–23 (IGSGSFGDI) and K38. Catalysis depends on D128, which acts as the Proton acceptor. Position 143 is a phosphoserine (S143). Residues 394–494 (RQQQPQQQVQ…DKPAGQSIWL (101 aa)) form a disordered region. 2 stretches are compositionally biased toward low complexity: residues 395–418 (QQQP…QQQP) and 432–444 (QQQQ…QQQQ). Positions 445–479 (VPMATTRATQYPPQINSNNFNTNQASVPPQMRSNP) are enriched in polar residues.

It belongs to the protein kinase superfamily. CK1 Ser/Thr protein kinase family. Casein kinase I subfamily. As to quaternary structure, interacts with HRI1. Interacts with ELP1/IKI3; the interaction leads to ELP1/IKI3 phosphorylation.

It localises to the cytoplasm. The protein resides in the nucleus. The protein localises to the nucleolus. Its subcellular location is the nucleoplasm. It catalyses the reaction L-seryl-[protein] + ATP = O-phospho-L-seryl-[protein] + ADP + H(+). The catalysed reaction is L-threonyl-[protein] + ATP = O-phospho-L-threonyl-[protein] + ADP + H(+). Functionally, protein kinase which phosphorylates serine and threonine residues. Can use casein as a substrate. Phosphorylates elongator complex member ELP1/IKI3 on 'Ser-1198' and 'Ser-1202' which promotes the tRNA modification function of the complex. Associated with repair of damaged DNA and meiosis. The sequence is that of Casein kinase I homolog HRR25 (HRR25) from Saccharomyces cerevisiae (strain ATCC 204508 / S288c) (Baker's yeast).